A 510-amino-acid polypeptide reads, in one-letter code: Cytochrome P450 94B1 (510 aa).

A helical transmembrane segment spans residues 3 to 23 (MLNAIILILFPIIGFVLIFSF). Residue Cys-450 coordinates heme.

It belongs to the cytochrome P450 family. It depends on heme as a cofactor.

The protein localises to the membrane. The enzyme catalyses a jasmonyl-L-amino acid + reduced [NADPH--hemoprotein reductase] + O2 = a 12-hydroxyjasmonyl-L-alpha-amino acid + oxidized [NADPH--hemoprotein reductase] + H2O + H(+). In terms of biological role, hydroxylase involved in the oxidation of the plant hormone jasmonoyl-L-isoleucine (JA-Ile), a bioactive phytohormone of the jasmonate-mediated signaling pathway. Converts JA-Ile to 12-hydroxy-JA-Ile. The sequence is that of Cytochrome P450 94B1 from Arabidopsis thaliana (Mouse-ear cress).